A 136-amino-acid polypeptide reads, in one-letter code: Protein NrdI (136 aa).

This sequence belongs to the NrdI family.

Functionally, probably involved in ribonucleotide reductase function. The chain is Protein NrdI from Salmonella arizonae (strain ATCC BAA-731 / CDC346-86 / RSK2980).